The sequence spans 544 residues: Methionine--tRNA ligase (544 aa).

The 'HIGH' region motif lies at 10–20; the sequence is PYANGSLHLGH. Positions 141, 144, 153, and 156 each coordinate Zn(2+). The short motif at 329–333 is the 'KMSKS' region element; the sequence is KLSTS. Thr332 lines the ATP pocket.

The protein belongs to the class-I aminoacyl-tRNA synthetase family. MetG type 1 subfamily. As to quaternary structure, monomer. Requires Zn(2+) as cofactor.

It localises to the cytoplasm. The catalysed reaction is tRNA(Met) + L-methionine + ATP = L-methionyl-tRNA(Met) + AMP + diphosphate. Is required not only for elongation of protein synthesis but also for the initiation of all mRNA translation through initiator tRNA(fMet) aminoacylation. The polypeptide is Methionine--tRNA ligase (Bacillus cereus (strain AH187)).